The following is a 939-amino-acid chain: Isoleucine--tRNA ligase (939 aa).

Residues 58–68 (PYANGNIHIGH) carry the 'HIGH' region motif. Residue Glu-562 participates in L-isoleucyl-5'-AMP binding. Positions 603 to 607 (KMSKS) match the 'KMSKS' region motif. Lys-606 serves as a coordination point for ATP. Cys-903, Cys-906, Cys-922, and Cys-925 together coordinate Zn(2+).

This sequence belongs to the class-I aminoacyl-tRNA synthetase family. IleS type 1 subfamily. Monomer. Zn(2+) is required as a cofactor.

It localises to the cytoplasm. It carries out the reaction tRNA(Ile) + L-isoleucine + ATP = L-isoleucyl-tRNA(Ile) + AMP + diphosphate. Catalyzes the attachment of isoleucine to tRNA(Ile). As IleRS can inadvertently accommodate and process structurally similar amino acids such as valine, to avoid such errors it has two additional distinct tRNA(Ile)-dependent editing activities. One activity is designated as 'pretransfer' editing and involves the hydrolysis of activated Val-AMP. The other activity is designated 'posttransfer' editing and involves deacylation of mischarged Val-tRNA(Ile). The polypeptide is Isoleucine--tRNA ligase (Buchnera aphidicola subsp. Baizongia pistaciae (strain Bp)).